We begin with the raw amino-acid sequence, 396 residues long: Elongation factor Tu 1 (396 aa).

The 197-residue stretch at 10-206 folds into the tr-type G domain; the sequence is KPHVNVGTIG…ALDSYIPLPE (197 aa). Residues 19 to 26 are G1; the sequence is GHVDHGKT. Position 19–26 (19–26) interacts with GTP; sequence GHVDHGKT. Thr26 is a Mg(2+) binding site. The tract at residues 60 to 64 is G2; it reads GITIN. A G3 region spans residues 81–84; the sequence is DCPG. Residues 81–85 and 136–139 each bind GTP; these read DCPGH and NKCD. Residues 136–139 form a G4 region; the sequence is NKCD. A G5 region spans residues 174–176; the sequence is SAK.

The protein belongs to the TRAFAC class translation factor GTPase superfamily. Classic translation factor GTPase family. EF-Tu/EF-1A subfamily. As to quaternary structure, monomer.

Its subcellular location is the cytoplasm. The enzyme catalyses GTP + H2O = GDP + phosphate + H(+). In terms of biological role, GTP hydrolase that promotes the GTP-dependent binding of aminoacyl-tRNA to the A-site of ribosomes during protein biosynthesis. The polypeptide is Elongation factor Tu 1 (Albidiferax ferrireducens (strain ATCC BAA-621 / DSM 15236 / T118) (Rhodoferax ferrireducens)).